Consider the following 361-residue polypeptide: Ubiquitin fusion degradation protein 1 (361 aa).

3 monoubiquitin-binding regions span residues C27–Y28, I30–M32, and W99–M101. The tract at residues E310 to D361 is disordered. Positions G317–G329 are enriched in polar residues. S354 is modified (phosphoserine).

Belongs to the UFD1 family. Component of the heterotrimeric CDC48-NPL4-UFD1 ATPase complex. The CDC48-NPL4-UFD1 ATPase complex interacts with the HRD1 ubiquitin ligase complex composed of the E3 ligase HRD1, its cofactors HRD3, USA1 and DER1, substrate recruiting factor YOS9 and CDC48-binding protein UBX2. Interaction between the complexes is mediated by interaction between CDC48-NPL4-UFD1 complex member CDC48 and HRD1 complex member UBX2. Forms a complex composed of CDC48, NPL4, UFD1, DOA1, SHP1 and deubiquitinase OTU1. Interacts with NPL4, CDC48 and UBX2.

Functions at a post-ubiquitation step in the ubiquitin fusion degradation (UFD) pathway. Has a role in the endoplasmic reticulum-associated degradation (ERAD) pathway. Required for the proteasome-dependent processing/activation of MGA2 and SPT23 transcription factors leading to the subsequent expression of OLE1. Has an additional role in the turnover of OLE1 where it targets ubiquitinated OLE1 and other proteins to the ERAD. The chain is Ubiquitin fusion degradation protein 1 (UFD1) from Saccharomyces cerevisiae (strain ATCC 204508 / S288c) (Baker's yeast).